Consider the following 354-residue polypeptide: Diaminopimelate epimerase, chloroplastic (354 aa).

Residues 1–44 constitute a chloroplast transit peptide; that stretch reads MSSATAAATATIAAAAAKLAATPAPAPSRRRLTLRGNPTARRCV. Active-site residues include C142 and C297.

Belongs to the diaminopimelate epimerase family.

The protein localises to the plastid. It is found in the chloroplast. It carries out the reaction (2S,6S)-2,6-diaminopimelate = meso-2,6-diaminopimelate. It participates in amino-acid biosynthesis; L-lysine biosynthesis via DAP pathway; DL-2,6-diaminopimelate from LL-2,6-diaminopimelate: step 1/1. This chain is Diaminopimelate epimerase, chloroplastic (DAPF), found in Oryza sativa subsp. japonica (Rice).